The chain runs to 636 residues: Chaperone protein DnaK2 (636 aa).

T198 carries the phosphothreonine; by autocatalysis modification. Residues 604–618 (EAGVGAPGAGPEAGT) are compositionally biased toward low complexity. Positions 604–636 (EAGVGAPGAGPEAGTSSGGGDDVIDAEFSEPEK) are disordered. Over residues 625–636 (DVIDAEFSEPEK) the composition is skewed to acidic residues.

Belongs to the heat shock protein 70 family.

In terms of biological role, acts as a chaperone. The sequence is that of Chaperone protein DnaK2 (dnaK2) from Synechocystis sp. (strain ATCC 27184 / PCC 6803 / Kazusa).